A 255-amino-acid polypeptide reads, in one-letter code: BTB/POZ domain-containing protein KCTD14 (255 aa).

The tract at residues 1 to 29 is disordered; sequence MWQGCAVERPVGRMTSQTPLPQSPRPRRP. The BTB domain maps to 33 to 130; sequence TVVELNVGGE…LLEDMPQIFG (98 aa).

This is BTB/POZ domain-containing protein KCTD14 (KCTD14) from Homo sapiens (Human).